Here is a 345-residue protein sequence, read N- to C-terminus: NADPH-dependent oxidoreductase 2-alkenal reductase (345 aa).

Residues 52–53 (PY), 163–169 (AASGAVG), Gly-188, Lys-192, Tyr-208, Asn-232, Cys-254, Tyr-260, 284–286 (FVV), Phe-330, and 334–336 (NVG) each bind NADP(+). Tyr-53 lines the substrate pocket. Tyr-260 is a substrate binding site.

The protein belongs to the NADP-dependent oxidoreductase L4BD family. Homodimer. In terms of tissue distribution, expressed in leaves.

Its subcellular location is the cytoplasm. It is found in the nucleus. The protein resides in the nucleoplasm. It catalyses the reaction an n-alkanal + NAD(+) = an alk-2-enal + NADH + H(+). The enzyme catalyses an n-alkanal + NADP(+) = an alk-2-enal + NADPH + H(+). Inhibited by N-ethylmaleimide and p-chloromercuribenzoic acid. Involved in the detoxification of reactive carbonyls. Acts on lipid peroxide-derived reactive aldehydes. Specific to a double bond activated by an adjacent carbonyl group. Can use both quinones and diamide as substrates, but not menadione, ferricyanide or phylloquinone. Can use 4-hydroxy-(2E)-nonenal (HNE), 4-hydroxy-(2E)-hexenal (HHE), (2E)-nonenal, (2E)-hexenal, (2E)-pentenal, propenal (acrolein), 3-buten-2-one and 3-penten-2-one, but not (R)-(-)-carvone, n-nonanal, n-hexanal, (3Z)-hexanal, cyclohex-2-en-1-one or 12-oxo phytodienoic acid (OPDA) as electron acceptors. Catalyzes the reduction of the alpha,beta-unsaturated bond of 2-alkenals, of lipid peroxide-derived oxenes 9-oxo-10(E),12(Z)-octadecadienoic acid (9-KODE) and 13-oxo-9(Z),11(E)-octadecadienoic acid (13-KODE), as well as 4-oxo-(2E)-nonenal and 4-hydroxynonenal. Can use 12-oxo-10(E) dodecanoate (traumatin), trans-1,3 diphenyl-2-propenone, trans-1,4-diphenyl-2-butene-1,4-dione, 9-oxo-12,13-epoxy-(10E)-octadecenoic acid (trans-EKODE-1b) and 9,13-dihydroxy-10-oxo-11-octadecenoic acid as substrates. Catalyzes the reduction of the 7-8 double bond of phenylpropanal substrates, such as p-coumaryl aldehyde and coniferyl aldehyde (in vitro). Has activity towards toxic substrates, such as 4-hydroxy-(2E)-nonenal (in vitro). May play a distinct role in plant antioxidant defense and is possibly involved in NAD(P)/NAD(P)H homeostasis. This Arabidopsis thaliana (Mouse-ear cress) protein is NADPH-dependent oxidoreductase 2-alkenal reductase.